Reading from the N-terminus, the 130-residue chain is Small ribosomal subunit protein uS8 (130 aa).

It belongs to the universal ribosomal protein uS8 family. As to quaternary structure, part of the 30S ribosomal subunit. Contacts proteins S5 and S12.

In terms of biological role, one of the primary rRNA binding proteins, it binds directly to 16S rRNA central domain where it helps coordinate assembly of the platform of the 30S subunit. This Marinomonas sp. (strain MWYL1) protein is Small ribosomal subunit protein uS8.